Here is a 958-residue protein sequence, read N- to C-terminus: Eukaryotic translation initiation factor 3 subunit A (958 aa).

Residues 93-123 (MHLATERAELARNQAQALEEALDVEDLEADK) adopt a coiled-coil conformation. Residues 316-513 (LQLIASSVVL…GLSSLVNRVL (198 aa)) enclose the PCI domain. Coiled-coil stretches lie at residues 548–696 (EALS…AKRE) and 796–861 (LRSE…LRKS). Over residues 804 to 859 (KRLQEEEEARKREEAERRKKEEAERQAKLDEIAEKQRRRMLELEEKEKREREEILR) the composition is skewed to basic and acidic residues. Residues 804-958 (KRLQEEEEAR…SRTSWPASRR (155 aa)) form a disordered region. Residues 877-894 (PAELGGAAPIPAAAATAP) show a composition bias toward low complexity. The segment covering 929 to 942 (KPDDRPSWRDERKP) has biased composition (basic and acidic residues). Over residues 946-958 (GSGSRTSWPASRR) the composition is skewed to polar residues.

This sequence belongs to the eIF-3 subunit A family. Component of the eukaryotic translation initiation factor 3 (eIF-3) complex.

It localises to the cytoplasm. RNA-binding component of the eukaryotic translation initiation factor 3 (eIF-3) complex, which is involved in protein synthesis of a specialized repertoire of mRNAs and, together with other initiation factors, stimulates binding of mRNA and methionyl-tRNAi to the 40S ribosome. The eIF-3 complex specifically targets and initiates translation of a subset of mRNAs involved in cell proliferation. This Nicotiana tabacum (Common tobacco) protein is Eukaryotic translation initiation factor 3 subunit A (TIF3A1).